The sequence spans 185 residues: Ribosome-recycling factor (185 aa).

Belongs to the RRF family.

It is found in the cytoplasm. Its function is as follows. Responsible for the release of ribosomes from messenger RNA at the termination of protein biosynthesis. May increase the efficiency of translation by recycling ribosomes from one round of translation to another. The polypeptide is Ribosome-recycling factor (Pectobacterium atrosepticum (strain SCRI 1043 / ATCC BAA-672) (Erwinia carotovora subsp. atroseptica)).